Here is a 216-residue protein sequence, read N- to C-terminus: 3-isopropylmalate dehydratase small subunit (216 aa).

This sequence belongs to the LeuD family. LeuD type 1 subfamily. As to quaternary structure, heterodimer of LeuC and LeuD.

The enzyme catalyses (2R,3S)-3-isopropylmalate = (2S)-2-isopropylmalate. It participates in amino-acid biosynthesis; L-leucine biosynthesis; L-leucine from 3-methyl-2-oxobutanoate: step 2/4. Functionally, catalyzes the isomerization between 2-isopropylmalate and 3-isopropylmalate, via the formation of 2-isopropylmaleate. The chain is 3-isopropylmalate dehydratase small subunit from Marinomonas sp. (strain MWYL1).